The following is a 988-amino-acid chain: Voltage-gated delayed rectifier potassium channel KCNH5 (988 aa).

At Met-1–Trp-217 the chain is on the cytoplasmic side. Residues Gln-12–Ser-90 form the PAS domain. Residues Asn-91 to Thr-143 enclose the PAC domain. A helical membrane pass occupies residues Asp-218 to Phe-238. Residues Lys-239–Asn-243 are Extracellular-facing. The helical transmembrane segment at Asn-244–Leu-264 threads the bilayer. Topologically, residues Asn-265 to Thr-291 are cytoplasmic. Residues Trp-292 to Val-312 traverse the membrane as a helical segment. Residues Asp-313–Leu-319 are Extracellular-facing. A helical; Voltage-sensor transmembrane segment spans residues Phe-320–His-340. Residues Tyr-341–Ala-346 are Cytoplasmic-facing. Residues Ala-347–Trp-367 traverse the membrane as a helical segment. The Extracellular portion of the chain corresponds to Tyr-368–Tyr-419. N-linked (GlcNAc...) asparagine glycosylation is present at Asn-403. The pore-forming intramembrane region spans Val-420–Pro-440. The short motif at Thr-432 to Asn-437 is the Selectivity filter element. The Extracellular segment spans residues Thr-441 to Lys-446. A helical membrane pass occupies residues Met-447 to Val-467. The Cytoplasmic portion of the chain corresponds to Thr-468–Phe-988. Ala-550–Thr-667 lines the a nucleoside 3',5'-cyclic phosphate pocket. The interval His-704–Gln-715 is calmodulin-binding. The tract at residues Lys-717–Gln-742 is disordered. The span at Asn-721–Gln-742 shows a compositional bias: polar residues. Lys-785 is covalently cross-linked (Glycyl lysine isopeptide (Lys-Gly) (interchain with G-Cter in ubiquitin)). Positions Gly-838–Ile-890 are disordered. The span at Ser-871–Leu-885 shows a compositional bias: basic and acidic residues. Ser-883 is modified (phosphoserine). The tract at residues Thr-909–Pro-948 is CAD (involved in subunit assembly). The disordered stretch occupies residues Asp-969–Phe-988. Over residues Glu-977 to Phe-988 the composition is skewed to basic and acidic residues.

It belongs to the potassium channel family. H (Eag) (TC 1.A.1.20) subfamily. Kv10.2/KCNH5 sub-subfamily. As to quaternary structure, homotetramer. The potassium channel is probably composed of a homo- or heterotetrameric complex of pore-forming alpha subunits that can associate with modulating beta subunits. Heteromultimer with KCNH1/EAG. As to expression, detected in brain, skeletal muscle, heart, placenta, lung and liver, and at low levels in kidney.

The protein resides in the membrane. It catalyses the reaction K(+)(in) = K(+)(out). Its function is as follows. Pore-forming (alpha) subunit of a voltage-gated delayed rectifier potassium channel that mediates outward-rectifying potassium currents which, on depolarization, reaches a steady-state level and do not inactivate. The kinetic is characterized by a slow activation time course and a small voltage dependence of the activation time constants, therefore, starts to open at more negative voltages. The activation kinetics depend on the prepulse potential and external divalent cation concentration. The time course of activation is biphasic with a fast and a slowly activating current component. With negative prepulses, the current activation is delayed and slowed down several fold, whereas more positive prepulses speed up activation, therefore the activation rate depends on holding potential. In Homo sapiens (Human), this protein is Voltage-gated delayed rectifier potassium channel KCNH5.